A 124-amino-acid polypeptide reads, in one-letter code: Glycine cleavage system H protein (124 aa).

The region spanning 22–104 (VATVGITEFA…YGAGWLFRVE (83 aa)) is the Lipoyl-binding domain. Lys63 carries the N6-lipoyllysine modification.

The protein belongs to the GcvH family. The glycine cleavage system is composed of four proteins: P, T, L and H. (R)-lipoate serves as cofactor.

The glycine cleavage system catalyzes the degradation of glycine. The H protein shuttles the methylamine group of glycine from the P protein to the T protein. This chain is Glycine cleavage system H protein, found in Beutenbergia cavernae (strain ATCC BAA-8 / DSM 12333 / CCUG 43141 / JCM 11478 / NBRC 16432 / NCIMB 13614 / HKI 0122).